The following is a 354-amino-acid chain: Sulfate permease CysP (354 aa).

8 consecutive transmembrane segments (helical) span residues leucine 3–alanine 23, alanine 40–valine 60, isoleucine 77–isoleucine 97, leucine 125–valine 145, isoleucine 164–asparagine 184, valine 197–leucine 217, valine 293–leucine 313, and isoleucine 320–isoleucine 340.

This sequence belongs to the inorganic phosphate transporter (PiT) (TC 2.A.20) family.

Its subcellular location is the cell membrane. Involved in the import of sulfate. This is Sulfate permease CysP (cysP) from Bacillus subtilis (strain 168).